Here is a 295-residue protein sequence, read N- to C-terminus: G1/S-specific cyclin-D1 (295 aa).

The Cyclin N-terminal domain occupies 28–152 (LRAMLKAEET…LLVNKLKWNL (125 aa)). The tract at residues 264-295 (QQSLDPKAAEEEEEEEEADLACTPTDVRDVNI) is disordered. Residue Lys-270 forms a Glycyl lysine isopeptide (Lys-Gly) (interchain with G-Cter in ubiquitin) linkage. The span at 273–282 (EEEEEEEEAD) shows a compositional bias: acidic residues. The residue at position 286 (Thr-286) is a Phosphothreonine.

Belongs to the cyclin family. Cyclin D subfamily. Interacts with either CDK4 or CDK6 protein kinase to form a serine/threonine kinase holoenzyme complex. The cyclin subunit imparts substrate specificity to the complex. Component of the ternary complex CCND1/CDK4/CDKN1B required for nuclear translocation and modulation of CDK4-mediated kinase activity. Interacts directly with CDKN1B. Can form similar complexes with either CDKN1A or CDKN2A. Interacts with UHRF2; the interaction ubiquitinates CCND1 and appears to occur independently of phosphorylation. Interacts with USP2. Interacts (via cyclin N-terminal domain) with INSM1 (via N-terminal region); the interaction competes with the binding of CCND1 to CDK4 during cell cycle progression and inhibits CDK4 activity. Interacts with CDK4; the interaction is prevented with the binding of CCND1 to INSM1 during cell cycle progression. Phosphorylation at Thr-286 by MAP kinases is required for ubiquitination and degradation by the DCX(AMBRA1) complex. It also plays an essential role for recognition by the FBXO31 component of SCF (SKP1-cullin-F-box) protein ligase complex following DNA damage. In terms of processing, ubiquitinated at Lys-270 by the DCX(AMBRA1) complex during the transition from G1 to S cell phase, leading to its degradation: ubiquitination is dependent on Thr-286 phosphorylation. The DCX(AMBRA1) complex represents the major regulator of CCND1 stability during the G1/S transition. Also ubiquitinated by the SCF(FBXO4) and Cul7-RING(FBXW8) ubiquitin-protein ligase complexes. Following DNA damage it is ubiquitinated by the SCF(FBXO31) protein ligase complex. SCF(FBXO31) ubiquitination is dependent on Thr-286 phosphorylation. Ubiquitinated also by UHRF2 apparently in a phosphorylation-independent manner. Ubiquitination leads to its degradation and G1 arrest. Deubiquitinated by USP2; leading to its stabilization.

It is found in the nucleus. The protein localises to the cytoplasm. The protein resides in the nucleus membrane. Its function is as follows. Regulatory component of the cyclin D1-CDK4 (DC) complex that phosphorylates and inhibits members of the retinoblastoma (RB) protein family including RB1 and regulates the cell-cycle during G(1)/S transition. Phosphorylation of RB1 allows dissociation of the transcription factor E2F from the RB/E2F complex and the subsequent transcription of E2F target genes which are responsible for the progression through the G(1) phase. Hypophosphorylates RB1 in early G(1) phase. Cyclin D-CDK4 complexes are major integrators of various mitogenenic and antimitogenic signals. Also a substrate for SMAD3, phosphorylating SMAD3 in a cell-cycle-dependent manner and repressing its transcriptional activity. Component of the ternary complex, cyclin D1/CDK4/CDKN1B, required for nuclear translocation and activity of the cyclin D-CDK4 complex. Exhibits transcriptional corepressor activity with INSM1 on the NEUROD1 and INS promoters in a cell cycle-independent manner. This Canis lupus familiaris (Dog) protein is G1/S-specific cyclin-D1 (CCND1).